The primary structure comprises 541 residues: MFFTKPRLHRIITHNLHHLLSPHLLLSEISGSLGDLGTLLPLLLALSLQGSIDLPSTLLFSGLFNILTGLVFGVPLPVQPMKAIAAASLQENADLETTVAAGAWVGFAVLLLGGTGGLKRVMRWVPGAVVRGVQVGAGMSLVVAAGGGMVRPLGWLWTPEENENGHGGLGEWLDSRALAVLAFGGLVVGLGQQQQQQQQSGEKPQERRKKRSKMPVQVPYALVLFLVGIMFAVVRVSLSKDSPQSPPPPPHDQPTNSAPPWTWIWNPLNHIHPKVFRSLLNPQALSMAIAQLPLTTLNSIIAASALASDLFPPDSYPQLYADDESSDSPLSPSPSASSSSLSSAPPQTPSAETPKPLSSPTSAEEGPVPLTPLSLSISAMNLLSAPFGCMPLCHGSGGLAAQHRFGARSGTSIILLGLTKFLLGLFFPGPGLLGLLGKFPKAFLGVMVLGAGVELARVGVRNVEGEEQDRMVMLMTAGTILAFKNDGVGFLAGMGCYGGFRVAAWLGGGTEKGRGGEQGLLGEEEEEEEQGRVDEESPLLR.

5 consecutive transmembrane segments (helical) span residues 24–44, 58–78, 98–118, 137–157, and 168–188; these read LLLS…PLLL, LLFS…PLPV, TVAA…TGGL, AGMS…GWLW, and GLGE…GLVV. The tract at residues 193-213 is disordered; that stretch reads QQQQQQQSGEKPQERRKKRSK. The next 2 membrane-spanning stretches (helical) occupy residues 214–234 and 287–307; these read MPVQ…FAVV and MAIA…SALA. A disordered region spans residues 317–366; the sequence is PQLYADDESSDSPLSPSPSASSSSLSSAPPQTPSAETPKPLSSPTSAEEG. Residues 327-351 show a composition bias toward low complexity; that stretch reads DSPLSPSPSASSSSLSSAPPQTPSA. A run of 2 helical transmembrane segments spans residues 413 to 433 and 435 to 455; these read IILL…PGLL and LLGK…GVEL. Residues 510-541 are disordered; sequence TEKGRGGEQGLLGEEEEEEEQGRVDEESPLLR.

It belongs to the SLC26A/SulP transporter (TC 2.A.53) family.

The protein localises to the vacuole membrane. Exports stored molybdate from the vacuole into the cytosol, making it available for molybdate cofactor (Moco) biosynthesis. Plays a role in molybdate homeostasis as high cytosolic levels of molybdate are toxic to cells. Not required for molybdate import into cells. In Neurospora crassa (strain ATCC 24698 / 74-OR23-1A / CBS 708.71 / DSM 1257 / FGSC 987), this protein is Molybdate transporter 1.